A 340-amino-acid chain; its full sequence is Ketol-acid reductoisomerase (NADP(+)) (340 aa).

The 183-residue stretch at 1–183 (MAITVYYDKD…GGGRTGIIET (183 aa)) folds into the KARI N-terminal Rossmann domain. NADP(+)-binding positions include 26-29 (FGSQ), S54, and 84-87 (DEFQ). The active site involves H109. An NADP(+)-binding site is contributed by G135. Positions 184–329 (TFKAETETDL…EKLRGMMPWI (146 aa)) constitute a KARI C-terminal knotted domain. D192, E196, E228, and E232 together coordinate Mg(2+). S253 is a substrate binding site.

This sequence belongs to the ketol-acid reductoisomerase family. The cofactor is Mg(2+).

The catalysed reaction is (2R)-2,3-dihydroxy-3-methylbutanoate + NADP(+) = (2S)-2-acetolactate + NADPH + H(+). The enzyme catalyses (2R,3R)-2,3-dihydroxy-3-methylpentanoate + NADP(+) = (S)-2-ethyl-2-hydroxy-3-oxobutanoate + NADPH + H(+). The protein operates within amino-acid biosynthesis; L-isoleucine biosynthesis; L-isoleucine from 2-oxobutanoate: step 2/4. Its pathway is amino-acid biosynthesis; L-valine biosynthesis; L-valine from pyruvate: step 2/4. Functionally, involved in the biosynthesis of branched-chain amino acids (BCAA). Catalyzes an alkyl-migration followed by a ketol-acid reduction of (S)-2-acetolactate (S2AL) to yield (R)-2,3-dihydroxy-isovalerate. In the isomerase reaction, S2AL is rearranged via a Mg-dependent methyl migration to produce 3-hydroxy-3-methyl-2-ketobutyrate (HMKB). In the reductase reaction, this 2-ketoacid undergoes a metal-dependent reduction by NADPH to yield (R)-2,3-dihydroxy-isovalerate. This chain is Ketol-acid reductoisomerase (NADP(+)), found in Campylobacter fetus subsp. fetus (strain 82-40).